We begin with the raw amino-acid sequence, 297 residues long: Protein-methionine-sulfoxide reductase catalytic subunit MsrP (297 aa).

Residues 1–35 (MLITPEKLYKQRRNFLKLGAGALISSSVLASKLSA) constitute a signal peptide (tat-type signal). Mo-molybdopterin is bound by residues 62-63 (YE), C116, T151, N201, R206, and 217-219 (SIK).

This sequence belongs to the MsrP family. In terms of assembly, heterodimer of a catalytic subunit (MsrP) and a heme-binding subunit (MsrQ). Requires Mo-molybdopterin as cofactor. Post-translationally, predicted to be exported by the Tat system. The position of the signal peptide cleavage has not been experimentally proven.

The protein resides in the periplasm. The catalysed reaction is L-methionyl-[protein] + a quinone + H2O = L-methionyl-(S)-S-oxide-[protein] + a quinol. The enzyme catalyses L-methionyl-[protein] + a quinone + H2O = L-methionyl-(R)-S-oxide-[protein] + a quinol. Its function is as follows. Part of the MsrPQ system that repairs oxidized periplasmic proteins containing methionine sulfoxide residues (Met-O), using respiratory chain electrons. Thus protects these proteins from oxidative-stress damage caused by reactive species of oxygen and chlorine generated by the host defense mechanisms. MsrPQ is essential for the maintenance of envelope integrity under bleach stress, rescuing a wide series of structurally unrelated periplasmic proteins from methionine oxidation. The catalytic subunit MsrP is non-stereospecific, being able to reduce both (R-) and (S-) diastereoisomers of methionine sulfoxide. This is Protein-methionine-sulfoxide reductase catalytic subunit MsrP from Campylobacter jejuni subsp. jejuni serotype O:2 (strain ATCC 700819 / NCTC 11168).